We begin with the raw amino-acid sequence, 394 residues long: Envelope glycoprotein D (394 aa).

Positions 1–25 (MGGAAARLGAVILFVVIVGLHGVRG) are cleaved as a signal peptide. Positions 26–57 (KYALADASLKMADPNRFRGKDLPVLDQLTDPP) are interaction with TNFRSF14. Topologically, residues 26–340 (KYALADASLK…YHPPATPNNM (315 aa)) are virion surface. Position 64 (H64) interacts with Zn(2+). 3 disulfides stabilise this stretch: C91–C214, C131–C227, and C143–C152. 2 N-linked (GlcNAc...) asparagine; by host glycosylation sites follow: N119 and N146. D240 is a binding site for Zn(2+). The interval 261–305 (LKIAGWHGPKAPYTSTLLPPELSETPNATQPELAPEDPEDSALLE) is profusion. Positions 275–301 (STLLPPELSETPNATQPELAPEDPEDS) are disordered. N-linked (GlcNAc...) asparagine; by host glycosylation is present at N287. Residues 341–361 (GLIAGAVGGSLLAALVICGIV) traverse the membrane as a helical segment. The Intravirion segment spans residues 362 to 394 (YWMHRRTRKAPKRIRLPHIREDDQPSSHQPLFY).

The protein belongs to the herpesviridae glycoprotein D family. In terms of assembly, homodimer. Interacts with host receptor TNFRSF14. Interacts with host receptor NECTIN1. Mutant Rid1 interacts with host receptor NECTIN2. Interacts (via profusion domain) with gB; this interaction occurs in the absence of gH/gL. Interacts (via profusion domain) with gH/gL heterodimer; this interaction occurs in the absence of gB. Associates with the gB-gH/gL-gD complex. Interacts (via C-terminus) with UL11 tegument protein. Interacts (via C-terminus) with VP22 tegument protein; this interaction might be very weak. Interacts with host RSAD2.

The protein resides in the virion membrane. It localises to the host Golgi apparatus. Functionally, envelope glycoprotein that binds to the host cell entry receptors NECTIN1, TNFRSF14/HVEM and 3-O-sulfated heparan sulfate, promoting the virus entry into host cells. May trigger fusion with host membrane, by recruiting the fusion machinery composed of gB and gH/gL. The polypeptide is Envelope glycoprotein D (gD) (Human herpesvirus 1 (strain KOS) (HHV-1)).